The chain runs to 328 residues: Galactinol synthase 10 (328 aa).

Lys-106 is a catalytic residue. The Mn(2+) site is built by Asp-122, Asp-124, and His-248.

Belongs to the glycosyltransferase 8 family. Galactosyltransferase subfamily. It depends on a divalent metal cation as a cofactor.

The protein localises to the cytoplasm. The enzyme catalyses myo-inositol + UDP-alpha-D-galactose = alpha-D-galactosyl-(1-&gt;3)-1D-myo-inositol + UDP + H(+). In terms of biological role, galactinol synthase involved in the biosynthesis of raffinose family oligosaccharides (RFOs) that function as osmoprotectants. May promote plant stress tolerance. The polypeptide is Galactinol synthase 10 (GOLS10) (Arabidopsis thaliana (Mouse-ear cress)).